We begin with the raw amino-acid sequence, 579 residues long: Probable pectinesterase/pectinesterase inhibitor 7 (579 aa).

An N-terminal signal peptide occupies residues 1–20 (MESPIFILITLSFFLQSVLA). The pectinesterase inhibitor 7 stretch occupies residues 22–185 (SQTLSNSSTI…TKLLGVSLAL (164 aa)). Residues asparagine 27, asparagine 115, asparagine 174, asparagine 274, asparagine 277, asparagine 287, asparagine 326, and asparagine 333 are each glycosylated (N-linked (GlcNAc...) asparagine). Residues 265–564 (VTVSQDGTGN…TVTGLFIEAD (300 aa)) are pectinesterase 7. A substrate-binding site is contributed by threonine 342. Asparagine 359 carries an N-linked (GlcNAc...) asparagine glycan. Residue glutamine 372 participates in substrate binding. The active-site Proton donor; for pectinesterase activity is aspartate 395. A disulfide bridge links cysteine 409 with cysteine 429. The active-site Nucleophile; for pectinesterase activity is the aspartate 416. N-linked (GlcNAc...) asparagine glycosylation is found at asparagine 462 and asparagine 475. The substrate site is built by arginine 484 and tryptophan 486. Asparagine 526, asparagine 533, asparagine 547, and asparagine 553 each carry an N-linked (GlcNAc...) asparagine glycan.

It in the N-terminal section; belongs to the PMEI family. The protein in the C-terminal section; belongs to the pectinesterase family. As to expression, expressed in siliques.

The protein localises to the secreted. It localises to the cell wall. It catalyses the reaction [(1-&gt;4)-alpha-D-galacturonosyl methyl ester](n) + n H2O = [(1-&gt;4)-alpha-D-galacturonosyl](n) + n methanol + n H(+). It participates in glycan metabolism; pectin degradation; 2-dehydro-3-deoxy-D-gluconate from pectin: step 1/5. Its function is as follows. Acts in the modification of cell walls via demethylesterification of cell wall pectin. This chain is Probable pectinesterase/pectinesterase inhibitor 7 (PME7), found in Arabidopsis thaliana (Mouse-ear cress).